The primary structure comprises 146 residues: Large ribosomal subunit protein uL15 (146 aa).

The tract at residues 1–46 (MKLHELQPAPGSRKKAVRVGRGIGSGNGKTAGRGHKGQKARSGGGV) is disordered. Over residues 21 to 31 (RGIGSGNGKTA) the composition is skewed to gly residues.

Belongs to the universal ribosomal protein uL15 family. In terms of assembly, part of the 50S ribosomal subunit.

Binds to the 23S rRNA. The sequence is that of Large ribosomal subunit protein uL15 from Geobacillus thermodenitrificans (strain NG80-2).